Here is a 216-residue protein sequence, read N- to C-terminus: Refilin-A (216 aa).

Residues 1 to 83 (MVGHLHLQGM…LPNPPASEMR (83 aa)) are disordered. Residues 12–22 (DSLKEQGREGL) are compositionally biased toward basic and acidic residues. Pro residues predominate over residues 29–39 (GLPPSPSPSPP). Positions 57-71 (ASSEPPGPSEARAPP) are enriched in low complexity. Residue Arg163 is modified to Asymmetric dimethylarginine.

It belongs to the Refilin family. Interacts with FLNA and FLNB.

It localises to the cytoplasm. It is found in the cytoskeleton. Involved in the regulation of the perinuclear actin network and nuclear shape through interaction with filamins. Plays an essential role in actin cytoskeleton formation in developing cartilaginous cells. This Homo sapiens (Human) protein is Refilin-A.